A 314-amino-acid polypeptide reads, in one-letter code: tRNA-cytidine(32) 2-sulfurtransferase (314 aa).

The PP-loop motif signature appears at 49–54 (SGGKDS). Positions 124, 127, and 215 each coordinate [4Fe-4S] cluster.

This sequence belongs to the TtcA family. In terms of assembly, homodimer. The cofactor is Mg(2+). [4Fe-4S] cluster serves as cofactor.

It is found in the cytoplasm. The enzyme catalyses cytidine(32) in tRNA + S-sulfanyl-L-cysteinyl-[cysteine desulfurase] + AH2 + ATP = 2-thiocytidine(32) in tRNA + L-cysteinyl-[cysteine desulfurase] + A + AMP + diphosphate + H(+). The protein operates within tRNA modification. Functionally, catalyzes the ATP-dependent 2-thiolation of cytidine in position 32 of tRNA, to form 2-thiocytidine (s(2)C32). The sulfur atoms are provided by the cysteine/cysteine desulfurase (IscS) system. The protein is tRNA-cytidine(32) 2-sulfurtransferase of Histophilus somni (strain 2336) (Haemophilus somnus).